The following is a 405-amino-acid chain: Bestrophin homolog 14 (405 aa).

4 helical membrane passes run 28 to 48 (LIGFYIAYYIVLAFQWYLLDE), 63 to 83 (IGAQYIPLSFLLGFFVSLIVA), 223 to 243 (LVYTQVVAIATYGYFFICLIG), and 256 to 276 (EITILFPIFTTFQMLFYLGWL).

Belongs to the anion channel-forming bestrophin (TC 1.A.46) family. Calcium-sensitive chloride channel subfamily.

Its subcellular location is the membrane. The sequence is that of Bestrophin homolog 14 (best-14) from Caenorhabditis elegans.